The primary structure comprises 283 residues: Phosphatidylglycerol--prolipoprotein diacylglyceryl transferase (283 aa).

Helical transmembrane passes span 18-38 (LGGIEVHWYGLAYACAIVVAF), 62-82 (YFLWAELGIVLGARIGYVLIY), 106-126 (FIGIRGMSYHGGLVGFLIASY), 136-156 (LLIYLDLIAISLPLGYVFGRI), 190-210 (PSQLIEAFLEGVVVFLMVMWA), 218-238 (GLLIVVYGLGYSLMRFIAEFY), and 252-272 (LSMGQILSVFMVIVSLGILLY). Residue R155 coordinates a 1,2-diacyl-sn-glycero-3-phospho-(1'-sn-glycerol).

It belongs to the Lgt family.

Its subcellular location is the cell inner membrane. The enzyme catalyses L-cysteinyl-[prolipoprotein] + a 1,2-diacyl-sn-glycero-3-phospho-(1'-sn-glycerol) = an S-1,2-diacyl-sn-glyceryl-L-cysteinyl-[prolipoprotein] + sn-glycerol 1-phosphate + H(+). The protein operates within protein modification; lipoprotein biosynthesis (diacylglyceryl transfer). Its function is as follows. Catalyzes the transfer of the diacylglyceryl group from phosphatidylglycerol to the sulfhydryl group of the N-terminal cysteine of a prolipoprotein, the first step in the formation of mature lipoproteins. The polypeptide is Phosphatidylglycerol--prolipoprotein diacylglyceryl transferase (Helicobacter pylori (strain J99 / ATCC 700824) (Campylobacter pylori J99)).